Consider the following 250-residue polypeptide: Formylaminopyrimidine transport permease protein ThiX (250 aa).

The next 6 helical transmembrane spans lie at Tyr-5–Ala-25, Ile-62–Phe-82, Leu-94–Phe-114, Gly-115–Val-135, Leu-172–Val-192, and Pro-216–Ile-236. An ABC transmembrane type-1 domain is found at Leu-56–Lys-237.

It belongs to the binding-protein-dependent transport system permease family. As to quaternary structure, the complex is likely composed of an ATP-binding protein (ThiZ), a transmembrane protein (ThiX) and a solute-binding protein (ThiY).

The protein localises to the cell membrane. The protein operates within cofactor biosynthesis; thiamine diphosphate biosynthesis. In terms of biological role, participates in a thiamine pyrimidine salvage pathway as part of the ABC transporter complex ThiXYZ involved in the import of thiamine degradation products such as the formylaminopyrimidine N-formyl-4-amino-5-aminomethyl-2-methylpyrimidine (FAMP). Is probably responsible for the translocation of the substrate across the membrane. The sequence is that of Formylaminopyrimidine transport permease protein ThiX from Halalkalibacterium halodurans (strain ATCC BAA-125 / DSM 18197 / FERM 7344 / JCM 9153 / C-125) (Bacillus halodurans).